Reading from the N-terminus, the 365-residue chain is tRNA-specific 2-thiouridylase MnmA (365 aa).

Residues 12-19 (AMSGGVDS) and Met-38 contribute to the ATP site. Cys-108 serves as the catalytic Nucleophile. Cys-108 and Cys-206 are oxidised to a cystine. Position 132 (Gly-132) interacts with ATP. The tract at residues 156–158 (KDQ) is interaction with tRNA. Residue Cys-206 is the Cysteine persulfide intermediate of the active site. Residues 312–313 (RY) form an interaction with tRNA region.

It belongs to the MnmA/TRMU family.

It is found in the cytoplasm. The enzyme catalyses S-sulfanyl-L-cysteinyl-[protein] + uridine(34) in tRNA + AH2 + ATP = 2-thiouridine(34) in tRNA + L-cysteinyl-[protein] + A + AMP + diphosphate + H(+). Functionally, catalyzes the 2-thiolation of uridine at the wobble position (U34) of tRNA, leading to the formation of s(2)U34. The sequence is that of tRNA-specific 2-thiouridylase MnmA from Carboxydothermus hydrogenoformans (strain ATCC BAA-161 / DSM 6008 / Z-2901).